Consider the following 337-residue polypeptide: Histidine N-acetyltransferase (337 aa).

Positions 1-2 (MK) are cleaved as a propeptide — removed in mature form. The 137-residue stretch at 21 to 157 (LQFSVATEED…GILLMRFRAE (137 aa)) folds into the N-acetyltransferase domain.

In terms of tissue distribution, expressed exclusively in the brain and lens.

The enzyme catalyses L-histidine + acetyl-CoA = N(alpha)-acetyl-L-histidine + CoA + H(+). Enzyme responsible for the N-acetyl-histidine (NAH) synthesis, which is a major constituent of brain and lens of ectothermic vertebrates. This Oreochromis niloticus (Nile tilapia) protein is Histidine N-acetyltransferase (hisat).